Reading from the N-terminus, the 324-residue chain is ATP phosphoribosyltransferase regulatory subunit (324 aa).

It belongs to the class-II aminoacyl-tRNA synthetase family. HisZ subfamily. Heteromultimer composed of HisG and HisZ subunits.

Its subcellular location is the cytoplasm. It functions in the pathway amino-acid biosynthesis; L-histidine biosynthesis; L-histidine from 5-phospho-alpha-D-ribose 1-diphosphate: step 1/9. Its function is as follows. Required for the first step of histidine biosynthesis. May allow the feedback regulation of ATP phosphoribosyltransferase activity by histidine. The protein is ATP phosphoribosyltransferase regulatory subunit of Carboxydothermus hydrogenoformans (strain ATCC BAA-161 / DSM 6008 / Z-2901).